A 317-amino-acid chain; its full sequence is uncharacterized protein (317 aa).

An HTH lysR-type domain is found at 1–60 (MKHELSSMKAFVILAESSSFNNAAKLLNITQPALTRRIKKMEEDLHVQLFERTTRKVTLT). A DNA-binding region (H-T-H motif) is located at residues 20-40 (FNNAAKLLNITQPALTRRIKK).

It belongs to the LysR transcriptional regulatory family.

This is an uncharacterized protein from Escherichia coli (strain K12).